The primary structure comprises 189 residues: Elongation factor P (189 aa).

Belongs to the elongation factor P family.

The protein resides in the cytoplasm. It participates in protein biosynthesis; polypeptide chain elongation. Its function is as follows. Involved in peptide bond synthesis. Stimulates efficient translation and peptide-bond synthesis on native or reconstituted 70S ribosomes in vitro. Probably functions indirectly by altering the affinity of the ribosome for aminoacyl-tRNA, thus increasing their reactivity as acceptors for peptidyl transferase. This chain is Elongation factor P, found in Pseudomonas putida (strain ATCC 700007 / DSM 6899 / JCM 31910 / BCRC 17059 / LMG 24140 / F1).